Reading from the N-terminus, the 181-residue chain is Deoxyuridine 5'-triphosphate nucleotidohydrolase (181 aa).

Substrate is bound by residues 96-98 (RSG), Asn-109, 113-115 (TVD), and Lys-123.

The protein belongs to the dUTPase family. The cofactor is Mg(2+).

It catalyses the reaction dUTP + H2O = dUMP + diphosphate + H(+). The protein operates within pyrimidine metabolism; dUMP biosynthesis; dUMP from dCTP (dUTP route): step 2/2. This enzyme is involved in nucleotide metabolism: it produces dUMP, the immediate precursor of thymidine nucleotides and it decreases the intracellular concentration of dUTP so that uracil cannot be incorporated into DNA. This chain is Deoxyuridine 5'-triphosphate nucleotidohydrolase, found in Corynebacterium efficiens (strain DSM 44549 / YS-314 / AJ 12310 / JCM 11189 / NBRC 100395).